The sequence spans 740 residues: ATP-dependent zinc metalloprotease YME1L (740 aa).

The Mitochondrial matrix portion of the chain corresponds to 1–256 (MFSTTTHSVP…KSGKTMKYLK (256 aa)). A helical transmembrane segment spans residues 257-277 (TLQTIVVIVVFLGIFLSFFTT). The Mitochondrial intermembrane portion of the chain corresponds to 278-740 (SNGSVFRSIQ…IKAILNESQT (463 aa)). 347-351 (GTGKT) contributes to the ATP binding site. His-563 provides a ligand contact to Zn(2+). Glu-564 is a catalytic residue. Zn(2+) is bound by residues His-567 and Asp-641.

In the N-terminal section; belongs to the AAA ATPase family. This sequence in the C-terminal section; belongs to the peptidase M41 family. Requires Zn(2+) as cofactor.

The protein localises to the mitochondrion inner membrane. ATP-dependent metalloprotease that catalyzes the degradation of folded and unfolded proteins with a suitable degron sequence in the mitochondrial intermembrane region. Plays an important role in regulating mitochondrial morphology and function by cleaving Opa1, giving rise to a form of Opa1 that promotes maintenance of normal mitochondrial structure and mitochondrial protein metabolism. Ensures cell proliferation, maintains normal cristae morphology and complex I respiration activity, promotes antiapoptotic activity and protects mitochondria from the accumulation of oxidatively damaged membrane proteins. Required to control the accumulation of nonassembled respiratory chain subunits such as ND-30. This Drosophila melanogaster (Fruit fly) protein is ATP-dependent zinc metalloprotease YME1L.